Here is a 44-residue protein sequence, read N- to C-terminus: Conotoxin Rg11a (44 aa).

Cystine bridges form between Cys1/Cys15, Cys8/Cys22, Cys14/Cys30, and Cys21/Cys36.

Expressed by the venom duct.

The protein localises to the secreted. Its function is as follows. Neurotoxin. Elicits hypersensibility when injected intracranially in mice. May act via potassium channel currents. In Conus regius (Crown cone), this protein is Conotoxin Rg11a.